Consider the following 333-residue polypeptide: Probable tRNA pseudouridine synthase B (333 aa).

Asp66 (nucleophile) is an active-site residue. Residues Leu233–Met308 enclose the PUA domain.

Belongs to the pseudouridine synthase TruB family. Type 2 subfamily.

It catalyses the reaction uridine(55) in tRNA = pseudouridine(55) in tRNA. Could be responsible for synthesis of pseudouridine from uracil-55 in the psi GC loop of transfer RNAs. The protein is Probable tRNA pseudouridine synthase B of Methanococcus maripaludis (strain DSM 14266 / JCM 13030 / NBRC 101832 / S2 / LL).